The following is a 363-amino-acid chain: 3-isopropylmalate dehydrogenase (363 aa).

79–92 (GPKWEHLPPNDQPE) lines the NAD(+) pocket. The substrate site is built by arginine 100, arginine 110, arginine 139, and aspartate 228. Residues aspartate 228, aspartate 252, and aspartate 256 each coordinate Mg(2+). Residue 286–298 (GSAPDIAGKNIAN) participates in NAD(+) binding.

This sequence belongs to the isocitrate and isopropylmalate dehydrogenases family. LeuB type 1 subfamily. Homodimer. Mg(2+) serves as cofactor. Mn(2+) is required as a cofactor.

The protein resides in the cytoplasm. The catalysed reaction is (2R,3S)-3-isopropylmalate + NAD(+) = 4-methyl-2-oxopentanoate + CO2 + NADH. The protein operates within amino-acid biosynthesis; L-leucine biosynthesis; L-leucine from 3-methyl-2-oxobutanoate: step 3/4. Its function is as follows. Catalyzes the oxidation of 3-carboxy-2-hydroxy-4-methylpentanoate (3-isopropylmalate) to 3-carboxy-4-methyl-2-oxopentanoate. The product decarboxylates to 4-methyl-2 oxopentanoate. In Vibrio vulnificus (strain CMCP6), this protein is 3-isopropylmalate dehydrogenase.